A 201-amino-acid polypeptide reads, in one-letter code: MVALLAEHTDTRQQAGLLVRPDNHDALSVAVTATPVVTTTGTPATPPALELDVQQGDGIGKRAGLPSRKQIETWVTSALYADAALTVRFVDEEEGRALNRSYRGKDYATNVLTFAYAESEDDPVTGDIVLCCPVVETEAREQRKPLEAHYAHLIVHGVLHAQGYEHEDDAEAEEMEAIETETLQALGFEDPYRDDHTPVAH.

Zn(2+)-binding residues include His156, His160, and His166.

The protein belongs to the endoribonuclease YbeY family. The cofactor is Zn(2+).

It is found in the cytoplasm. Functionally, single strand-specific metallo-endoribonuclease involved in late-stage 70S ribosome quality control and in maturation of the 3' terminus of the 16S rRNA. This is Endoribonuclease YbeY from Cupriavidus pinatubonensis (strain JMP 134 / LMG 1197) (Cupriavidus necator (strain JMP 134)).